We begin with the raw amino-acid sequence, 314 residues long: Ribosomal protein L11 methyltransferase (314 aa).

S-adenosyl-L-methionine-binding residues include Thr-161, Gly-182, Asp-204, and Asn-248.

The protein belongs to the methyltransferase superfamily. PrmA family.

It is found in the cytoplasm. It catalyses the reaction L-lysyl-[protein] + 3 S-adenosyl-L-methionine = N(6),N(6),N(6)-trimethyl-L-lysyl-[protein] + 3 S-adenosyl-L-homocysteine + 3 H(+). Its function is as follows. Methylates ribosomal protein L11. The chain is Ribosomal protein L11 methyltransferase from Listeria monocytogenes serotype 4a (strain HCC23).